The chain runs to 525 residues: UPF0288 protein MM_0912 (525 aa).

It belongs to the UPF0288 family.

The chain is UPF0288 protein MM_0912 from Methanosarcina mazei (strain ATCC BAA-159 / DSM 3647 / Goe1 / Go1 / JCM 11833 / OCM 88) (Methanosarcina frisia).